Reading from the N-terminus, the 116-residue chain is Large ribosomal subunit protein bL17 (116 aa).

This sequence belongs to the bacterial ribosomal protein bL17 family. In terms of assembly, part of the 50S ribosomal subunit. Contacts protein L32.

In Synechocystis sp. (strain ATCC 27184 / PCC 6803 / Kazusa), this protein is Large ribosomal subunit protein bL17.